A 97-amino-acid polypeptide reads, in one-letter code: Small ribosomal subunit protein bS16c (97 aa).

The protein belongs to the bacterial ribosomal protein bS16 family.

Its subcellular location is the plastid. The protein localises to the chloroplast. In Piper cenocladum (Ant piper), this protein is Small ribosomal subunit protein bS16c.